The chain runs to 775 residues: Dipeptidyl peptidase 4 (775 aa).

Positions Met1 to Ala15 are cleaved as a signal peptide. N-linked (GlcNAc...) asparagine glycans are attached at residues Asn81, Asn111, Asn170, and Asn219. Catalysis depends on charge relay system residues Ser613, Asp690, and His725.

Belongs to the peptidase S9B family.

The protein localises to the secreted. It carries out the reaction Release of an N-terminal dipeptide, Xaa-Yaa-|-Zaa-, from a polypeptide, preferentially when Yaa is Pro, provided Zaa is neither Pro nor hydroxyproline.. Extracellular dipeptidyl-peptidase which removes N-terminal dipeptides sequentially from polypeptides having unsubstituted N-termini provided that the penultimate residue is proline. Contributes to pathogenicity. In Trichophyton tonsurans (Scalp ringworm fungus), this protein is Dipeptidyl peptidase 4 (DPP4).